The primary structure comprises 191 residues: Ion-translocating oxidoreductase complex subunit B (191 aa).

The hydrophobic stretch occupies residues 1–26 (MSAVLIAVLALLALCLLGGAILGFAA). The 59-residue stretch at 32–90 (EGDPIAEQINALLPQTQCGQCGYPGCKPYAEAIAGGDKINKCPPGGEATIQALADLLDV) folds into the 4Fe-4S domain. [4Fe-4S] cluster contacts are provided by cysteine 49, cysteine 52, cysteine 57, cysteine 73, cysteine 114, cysteine 117, cysteine 120, cysteine 124, cysteine 144, cysteine 147, cysteine 150, and cysteine 154. 4Fe-4S ferredoxin-type domains are found at residues 105-134 (MVAY…GAAR) and 135-164 (QMHT…MIEV).

This sequence belongs to the 4Fe4S bacterial-type ferredoxin family. RnfB subfamily. The complex is composed of six subunits: RnfA, RnfB, RnfC, RnfD, RnfE and RnfG. The cofactor is [4Fe-4S] cluster.

The protein resides in the cell inner membrane. In terms of biological role, part of a membrane-bound complex that couples electron transfer with translocation of ions across the membrane. This is Ion-translocating oxidoreductase complex subunit B from Stutzerimonas stutzeri (strain A1501) (Pseudomonas stutzeri).